The chain runs to 254 residues: MVWMNNSENTPGSLPPGRPLQTEFNDGRDYPRLGNFSFRRGTLTDNQEALWNEHWPKLGKVLADEVIDLPEWFDRDAETIAEIGSGTGTSTAAMAPLEAEKNIVAVELYRPGLAKLLGSVVRGDIHNVRMIRGDGVEVLQRMFAPESLSGVRIYFPDPWPKARHHKRRIVQSGTLHLIASRLKPGGILHIATDHADYAEWIDELVEVEEQLEYLGWPEDQSDIPQLTDRQVITKFEGKGLDKEHIIREYLWRKK.

S-adenosyl-L-methionine-binding residues include Glu82, Glu107, Asp134, and Asp157. Asp157 is an active-site residue. Residues Lys161, Asp193, and 233-236 (TKFE) contribute to the substrate site.

This sequence belongs to the class I-like SAM-binding methyltransferase superfamily. TrmB family.

It catalyses the reaction guanosine(46) in tRNA + S-adenosyl-L-methionine = N(7)-methylguanosine(46) in tRNA + S-adenosyl-L-homocysteine. The protein operates within tRNA modification; N(7)-methylguanine-tRNA biosynthesis. Functionally, catalyzes the formation of N(7)-methylguanine at position 46 (m7G46) in tRNA. This chain is tRNA (guanine-N(7)-)-methyltransferase, found in Corynebacterium jeikeium (strain K411).